Here is a 69-residue protein sequence, read N- to C-terminus: Metallothionein-like protein CRS5 (69 aa).

The protein belongs to the metallothionein superfamily. Type 13 family.

Its function is as follows. Critical role in copper (specific) homeostasis and detoxification. May protect by directly chelating and sequestering copper ions. This is Metallothionein-like protein CRS5 (CRS5) from Saccharomyces cerevisiae (strain RM11-1a) (Baker's yeast).